The chain runs to 279 residues: Lyso-glycine lipid O-acyltransferase (279 aa).

This sequence belongs to the O-acyltransferase GlsA family.

It carries out the reaction a lyso-glycine lipid + a fatty acyl-[ACP] = a glycine lipid + holo-[ACP]. It catalyses the reaction N-[(3R)-3-hydroxyhexadecanoyl]-glycine + hexadecanoyl-[ACP] = N-[(3R)-3-(hexadecanoyloxy)hexadecanoyl]-glycine + holo-[ACP]. It functions in the pathway lipid metabolism. Is involved in the production of glycine lipids (GL), which are phosphorus-free membrane lipids. Catalyzes the second step of GL biosynthesis, i.e. the O-acylation of the hydroxyl group of lyso-glycine lipids, resulting in the production of the mature diacylated glycine lipids. This Phocaeicola vulgatus (strain ATCC 8482 / DSM 1447 / JCM 5826 / CCUG 4940 / NBRC 14291 / NCTC 11154) (Bacteroides vulgatus) protein is Lyso-glycine lipid O-acyltransferase.